The chain runs to 1399 residues: Meiosis-specific protein ASY2 (1399 aa).

In terms of domain architecture, HORMA spans 10–248 (QQSLILTTEL…SQHHVLTVKV (239 aa)). A compositionally biased stretch (acidic residues) spans 257–266 (PCEDENDNMQ). 5 disordered regions span residues 257 to 281 (PCED…HDDQ), 487 to 525 (SKPK…SSEP), 617 to 656 (RLTG…AAPE), 940 to 974 (PPPP…VDQV), and 1045 to 1090 (DQDK…AAPK). Over residues 267–281 (DDERSKGPDSLHDDQ) the composition is skewed to basic and acidic residues. Residues 509-523 (SAPPSSEPKSAPPSS) are compositionally biased toward pro residues. Residues 617–631 (RLTGNPSNEAQSSRS) are compositionally biased toward polar residues. Residues 1205–1246 (MASLRDAAEIHKAEMSSLNDEVKRLNSREADLQKEFSDLQVA) are a coiled coil.

The protein localises to the chromosome. It localises to the nucleus. Its function is as follows. Required for normal meiosis. This chain is Meiosis-specific protein ASY2, found in Arabidopsis thaliana (Mouse-ear cress).